A 362-amino-acid polypeptide reads, in one-letter code: Probable choline-phosphate cytidylyltransferase (362 aa).

Positions 1–37 (MGEEGIKINDTHKRRIDEVEPSEKEDNVERQTKKYNF) are enriched in basic and acidic residues. Residues 1-79 (MGEEGIKIND…VSPVEEEPRD (79 aa)) are disordered. CTP is bound by residues 109 to 117 (VFDLFHIGH) and Lys-147. The substrate site is built by Lys-147 and Trp-176. CTP-binding positions include 193–194 (HD), Tyr-198, and 221–225 (RTEGV). The interval 308–362 (KNPLHGSSEPSSPGPTGFLGGINRWMQRRSSSHYDLPRVGNEIAASSSSATEENH) is disordered. Low complexity-rich tracts occupy residues 313-323 (GSSEPSSPGPT) and 351-362 (AASSSSATEENH). Ser-315 and Ser-319 each carry phosphoserine. Phosphothreonine is present on Thr-323. Phosphoserine is present on Ser-355.

It belongs to the cytidylyltransferase family.

It is found in the nucleus. It carries out the reaction phosphocholine + CTP + H(+) = CDP-choline + diphosphate. The sequence is that of Probable choline-phosphate cytidylyltransferase from Schizosaccharomyces pombe (strain 972 / ATCC 24843) (Fission yeast).